Consider the following 242-residue polypeptide: Triosephosphate isomerase (242 aa).

A substrate-binding site is contributed by asparagine 9 to lysine 11. Histidine 90 functions as the Electrophile in the catalytic mechanism. Glutamate 162 functions as the Proton acceptor in the catalytic mechanism. Residues glycine 168, serine 205, and glycine 226–glycine 227 contribute to the substrate site.

Belongs to the triosephosphate isomerase family. Homodimer.

It localises to the cytoplasm. It carries out the reaction D-glyceraldehyde 3-phosphate = dihydroxyacetone phosphate. It functions in the pathway carbohydrate biosynthesis; gluconeogenesis. It participates in carbohydrate degradation; glycolysis; D-glyceraldehyde 3-phosphate from glycerone phosphate: step 1/1. In terms of biological role, involved in the gluconeogenesis. Catalyzes stereospecifically the conversion of dihydroxyacetone phosphate (DHAP) to D-glyceraldehyde-3-phosphate (G3P). This chain is Triosephosphate isomerase, found in Azoarcus sp. (strain BH72).